The following is a 219-amino-acid chain: Probable GTP-binding protein EngB (219 aa).

In terms of domain architecture, EngB-type G spans 31 to 205 (VGVEIAFAGR…LSILNEWCHP (175 aa)). GTP contacts are provided by residues 39-46 (GRSNAGKS), 66-70 (GRTQL), 84-87 (DLPG), 151-154 (TKSD), and 184-186 (FSA). The Mg(2+) site is built by S46 and T68.

This sequence belongs to the TRAFAC class TrmE-Era-EngA-EngB-Septin-like GTPase superfamily. EngB GTPase family. Mg(2+) serves as cofactor.

Its function is as follows. Necessary for normal cell division and for the maintenance of normal septation. The chain is Probable GTP-binding protein EngB from Shewanella sp. (strain MR-7).